A 907-amino-acid chain; its full sequence is Probable disease resistance protein At1g58390 (907 aa).

Positions 144–456 (QGDRQREMRQ…AEGISTAEDY (313 aa)) constitute an NB-ARC domain. 190 to 197 (GMGGLGKT) lines the ATP pocket. LRR repeat units lie at residues 608 to 631 (LIHLRYLSLQDAKVSHLPSSLGNL) and 843 to 868 (MPLLETLSILDCEELKEIPDGLRFIY).

Belongs to the disease resistance NB-LRR family.

Possible disease resistance protein. The polypeptide is Probable disease resistance protein At1g58390 (Arabidopsis thaliana (Mouse-ear cress)).